The following is a 272-amino-acid chain: Large ribosomal subunit protein uL2cz/uL2cy (272 aa).

A compositionally biased stretch (polar residues) spans 1-13; the sequence is MHLYKTSTPSTRN. Disordered regions lie at residues 1–27 and 222–272; these read MHLY…PRNN and NPVD…RRSK.

This sequence belongs to the universal ribosomal protein uL2 family. In terms of assembly, part of the 50S ribosomal subunit.

It is found in the plastid. The protein resides in the chloroplast. In Buxus microphylla (Littleleaf boxwood), this protein is Large ribosomal subunit protein uL2cz/uL2cy (rpl2-A).